The sequence spans 505 residues: ATP synthase subunit alpha, chloroplastic (505 aa).

172 to 179 (GDRQTGKT) is a binding site for ATP.

Belongs to the ATPase alpha/beta chains family. In terms of assembly, F-type ATPases have 2 components, CF(1) - the catalytic core - and CF(0) - the membrane proton channel. CF(1) has five subunits: alpha(3), beta(3), gamma(1), delta(1), epsilon(1). CF(0) has four main subunits: a, b, b' and c.

It is found in the plastid. The protein resides in the chloroplast thylakoid membrane. It catalyses the reaction ATP + H2O + 4 H(+)(in) = ADP + phosphate + 5 H(+)(out). Functionally, produces ATP from ADP in the presence of a proton gradient across the membrane. The alpha chain is a regulatory subunit. This is ATP synthase subunit alpha, chloroplastic from Antithamnion sp. (Red alga).